Reading from the N-terminus, the 297-residue chain is Acetylglutamate kinase (297 aa).

Residues 68–69 (GG), Arg-90, and Asn-195 contribute to the substrate site.

This sequence belongs to the acetylglutamate kinase family. ArgB subfamily.

The protein resides in the cytoplasm. The enzyme catalyses N-acetyl-L-glutamate + ATP = N-acetyl-L-glutamyl 5-phosphate + ADP. The protein operates within amino-acid biosynthesis; L-arginine biosynthesis; N(2)-acetyl-L-ornithine from L-glutamate: step 2/4. Catalyzes the ATP-dependent phosphorylation of N-acetyl-L-glutamate. The polypeptide is Acetylglutamate kinase (Mesorhizobium japonicum (strain LMG 29417 / CECT 9101 / MAFF 303099) (Mesorhizobium loti (strain MAFF 303099))).